Consider the following 478-residue polypeptide: UDP-N-acetylmuramate--L-alanine ligase (478 aa).

112-118 (GTHGKTT) contacts ATP.

The protein belongs to the MurCDEF family.

The protein localises to the cytoplasm. It catalyses the reaction UDP-N-acetyl-alpha-D-muramate + L-alanine + ATP = UDP-N-acetyl-alpha-D-muramoyl-L-alanine + ADP + phosphate + H(+). It functions in the pathway cell wall biogenesis; peptidoglycan biosynthesis. In terms of biological role, cell wall formation. The chain is UDP-N-acetylmuramate--L-alanine ligase from Polaromonas naphthalenivorans (strain CJ2).